The chain runs to 838 residues: Protein translocase subunit SecA (838 aa).

ATP contacts are provided by residues glutamine 87, 105–109 (GEGKT), and aspartate 494. 2 stretches are compositionally biased toward basic and acidic residues: residues 781–790 (EQEFQHKDET) and 803–819 (EDAKKEPKRREAPKVGR). The disordered stretch occupies residues 781 to 838 (EQEFQHKDETANVQYSGPAESAEDAKKEPKRREAPKVGRNDPCPCGSGKKYKKCHGAK). Zn(2+) contacts are provided by cysteine 823, cysteine 825, cysteine 834, and histidine 835. Residues 829–838 (KKYKKCHGAK) show a composition bias toward basic residues.

Belongs to the SecA family. In terms of assembly, monomer and homodimer. Part of the essential Sec protein translocation apparatus which comprises SecA, SecYEG and auxiliary proteins SecDF-YajC and YidC. Zn(2+) is required as a cofactor.

Its subcellular location is the cell inner membrane. The protein resides in the cytoplasm. The enzyme catalyses ATP + H2O + cellular proteinSide 1 = ADP + phosphate + cellular proteinSide 2.. Part of the Sec protein translocase complex. Interacts with the SecYEG preprotein conducting channel. Has a central role in coupling the hydrolysis of ATP to the transfer of proteins into and across the cell membrane, serving as an ATP-driven molecular motor driving the stepwise translocation of polypeptide chains across the membrane. The protein is Protein translocase subunit SecA of Solidesulfovibrio magneticus (strain ATCC 700980 / DSM 13731 / RS-1) (Desulfovibrio magneticus).